Here is a 245-residue protein sequence, read N- to C-terminus: Aliphatic sulfonates import ATP-binding protein SsuB 1 (245 aa).

The ABC transporter domain occupies Val8–Tyr223. Gly40–Thr47 is an ATP binding site.

The protein belongs to the ABC transporter superfamily. Aliphatic sulfonates importer (TC 3.A.1.17.2) family. As to quaternary structure, the complex is composed of two ATP-binding proteins (SsuB), two transmembrane proteins (SsuC) and a solute-binding protein (SsuA).

It localises to the cell membrane. The catalysed reaction is ATP + H2O + aliphatic sulfonate-[sulfonate-binding protein]Side 1 = ADP + phosphate + aliphatic sulfonateSide 2 + [sulfonate-binding protein]Side 1.. Functionally, part of the ABC transporter complex SsuABC involved in aliphatic sulfonates import. Responsible for energy coupling to the transport system. The protein is Aliphatic sulfonates import ATP-binding protein SsuB 1 of Nocardia farcinica (strain IFM 10152).